A 796-amino-acid chain; its full sequence is Polyribonucleotide nucleotidyltransferase (796 aa).

Residues Asp-490 and Asp-496 each coordinate Mg(2+). Residues 557–616 (PRIESIFINKDKIRNVIGSGGKNIRDICEKTGAKIEIIQDGTVMIYAVNNEAVEYAKSMI) form the KH domain. The S1 motif domain maps to 626-693 (GKVFEGTVVE…DREHVQLSMR (68 aa)). Low complexity predominate over residues 714–736 (SFSDDSSSSGTSSSGSSFKESYS). The tract at residues 714-796 (SFSDDSSSSG…HEVPRKPRFF (83 aa)) is disordered. Positions 740 to 755 (HGSHEKRRSGGSRSSR) are enriched in basic residues. Residues 771 to 784 (SDFGNNNRSFSNSR) are compositionally biased toward low complexity. The span at 785-796 (NGHEVPRKPRFF) shows a compositional bias: basic and acidic residues.

The protein belongs to the polyribonucleotide nucleotidyltransferase family. Requires Mg(2+) as cofactor.

The protein resides in the cytoplasm. It catalyses the reaction RNA(n+1) + phosphate = RNA(n) + a ribonucleoside 5'-diphosphate. Functionally, involved in mRNA degradation. Catalyzes the phosphorolysis of single-stranded polyribonucleotides processively in the 3'- to 5'-direction. This chain is Polyribonucleotide nucleotidyltransferase, found in Ehrlichia canis (strain Jake).